The primary structure comprises 231 residues: Ion-translocating oxidoreductase complex subunit E (231 aa).

6 helical membrane-spanning segments follow: residues G18–A38, L39–V59, I69–A89, G93–G113, A128–G148, and P182–G202.

It belongs to the NqrDE/RnfAE family. The complex is composed of six subunits: RnfA, RnfB, RnfC, RnfD, RnfE and RnfG.

Its subcellular location is the cell inner membrane. In terms of biological role, part of a membrane-bound complex that couples electron transfer with translocation of ions across the membrane. The chain is Ion-translocating oxidoreductase complex subunit E from Shewanella denitrificans (strain OS217 / ATCC BAA-1090 / DSM 15013).